The following is a 262-amino-acid chain: Phosphonates import ATP-binding protein PhnC (262 aa).

Positions 5-253 (IRVEKLAKTF…RFDHLYRSIN (249 aa)) constitute an ABC transporter domain. 37–44 (GPSGSGKS) contacts ATP.

This sequence belongs to the ABC transporter superfamily. Phosphonates importer (TC 3.A.1.9.1) family. The complex is composed of two ATP-binding proteins (PhnC), two transmembrane proteins (PhnE) and a solute-binding protein (PhnD).

Its subcellular location is the cell inner membrane. It carries out the reaction phosphonate(out) + ATP + H2O = phosphonate(in) + ADP + phosphate + H(+). Part of the ABC transporter complex PhnCDE involved in phosphonates import. Responsible for energy coupling to the transport system. The protein is Phosphonates import ATP-binding protein PhnC of Shigella boydii serotype 4 (strain Sb227).